The sequence spans 523 residues: Cytochrome P450 CYP82J17 (523 aa).

The chain crosses the membrane as a helical span at residues 4 to 24 (FLSQPITIVLAILSVLLYNIW). C462 contributes to the heme binding site.

It belongs to the cytochrome P450 family. Mainly expressed in leaves and seed pods and, to a lower extent, in flowers and stems.

It is found in the membrane. It participates in steroid metabolism; cholesterol metabolism. In terms of biological role, involved in the biosynthesis of spiroketal steroid and saponin natural products from cholesterol such as diosgenin and analogs (e.g. furostanol and spirostanol), plant defense compounds used as main precursors for the industrial production of steroid hormones. During the 5,6-spiroketalization of cholesterol, may catalyze the 27-monohydroxylation of furostanol-type steroid to an intermediate product that undergoes a stereospecific formation of the terminal heterocycle to yield diosgenin. This Trigonella foenum-graecum (Fenugreek) protein is Cytochrome P450 CYP82J17.